The following is a 111-amino-acid chain: Cytochrome c (111 aa).

Residue Ala1 is modified to N-acetylalanine. Positions 22, 25, and 26 each coordinate heme c. An N6,N6,N6-trimethyllysine modification is found at Lys80. Residue Met88 coordinates heme c. The residue at position 94 (Lys94) is an N6,N6,N6-trimethyllysine.

It belongs to the cytochrome c family. In terms of processing, binds 1 heme c group covalently per subunit.

It localises to the mitochondrion intermembrane space. Electron carrier protein. The oxidized form of the cytochrome c heme group can accept an electron from the heme group of the cytochrome c1 subunit of cytochrome reductase. Cytochrome c then transfers this electron to the cytochrome oxidase complex, the final protein carrier in the mitochondrial electron-transport chain. This Vigna radiata var. radiata (Mung bean) protein is Cytochrome c.